The sequence spans 302 residues: Pentatricopeptide repeat-containing protein At4g38150 (302 aa).

Residues 26 to 40 (SATRFLSTGDNGQVD) show a composition bias toward polar residues. 2 disordered regions span residues 26–82 (SATR…TTLS) and 94–116 (VNQDSRETPKPEQYPQEPLPPPE). The segment covering 54 to 67 (LRGERSSNSHREPP) has biased composition (basic and acidic residues). 4 PPR repeats span residues 130–164 (LIPNAVAMLDGLCKDGLVQEAMKLFGLMRDKGTIP), 165–199 (EVVIYTAVVEAFCKAHKIEDAKRIFRKMQNNGIAP), 200–234 (NAFSYGVLVQGLYNCNMLDDAVAFCSEMLESGHSP), and 235–269 (NVPTFVELVDALCRVKGVEQAQSAIDTLNQKGFAV).

The protein belongs to the PPR family. P subfamily.

The protein is Pentatricopeptide repeat-containing protein At4g38150 of Arabidopsis thaliana (Mouse-ear cress).